We begin with the raw amino-acid sequence, 119 residues long: Gas vesicle protein O1 (119 aa).

The segment covering 1–12 (MADPANDRSERE) has biased composition (basic and acidic residues). The segment at 1–48 (MADPANDRSEREEGGEDDETPPASDGNPSPSANSFTLSNAQTRAREAA) is disordered. Over residues 26-42 (GNPSPSANSFTLSNAQT) the composition is skewed to polar residues.

This sequence belongs to the gas vesicle GvpO family. In terms of assembly, forms homodimers, forms a GvpN1-GvpO1 heterodimer, interacts with GvpC1 (via the latter's C-terminus), GvpF1, GvpI1 and GvpL1, might interact with GvpA1.

The protein resides in the gas vesicle. It localises to the cytoplasm. Its function is as follows. A minor component of the gas vesicle, also found in soluble extracts. May play a role in transcription and/or RNA stability and in GV assembly. Gas vesicles are hollow, gas filled proteinaceous nanostructures found in several microbial planktonic microorganisms. They allow positioning of halobacteria at the optimal depth for growth in the poorly aerated, shallow brine pools of their habitat. Expression of a 9.5 kb p-vac DNA fragment containing 2 divergently transcribed regions (gvpD-gvpE-gvpF-gvpG-gvpH-gvpI-gvpJ-gvpK-gvpL-gvpM and gvpA-gvpC-gvpN-gvpO) allows H.volcanii to produce gas vesicles. A minimal gas vesicle can be made in H.volcanii by gvpA1-gvpO1 gvpF1-gvpG1-gvpJ1-gvpK1-gvpL1-gvpM1; lack of enough GvpJ1 prevents formation. The same region restores gas vesicle production in H.halobium without the p-vac locus, but it still has the c-vac locus. The protein is Gas vesicle protein O1 of Halobacterium salinarum (strain ATCC 700922 / JCM 11081 / NRC-1) (Halobacterium halobium).